The following is a 212-amino-acid chain: Urease accessory protein UreG 2 (212 aa).

11-18 (GPVGSGKT) contributes to the GTP binding site.

It belongs to the SIMIBI class G3E GTPase family. UreG subfamily. In terms of assembly, homodimer. UreD, UreF and UreG form a complex that acts as a GTP-hydrolysis-dependent molecular chaperone, activating the urease apoprotein by helping to assemble the nickel containing metallocenter of UreC. The UreE protein probably delivers the nickel.

The protein resides in the cytoplasm. Its function is as follows. Facilitates the functional incorporation of the urease nickel metallocenter. This process requires GTP hydrolysis, probably effectuated by UreG. This is Urease accessory protein UreG 2 from Brucella abortus (strain 2308).